The primary structure comprises 306 residues: MANEFINFEKISRKTWQHLHQESQPPLNENELNSIKSLNDRISIKDVTDIYLPLISLIQIYKKSQENLSFSKSIFLQKNISNRPFIIGVSGSVAVGKSTTSRLLQLLLARTFKDSSVELMTTDGFLYPNAVLSSRHMLNKKGFPESYDMERLLDFLDTIKNGQSAEIPVYSHEIYDIVPNKSQIIEVPDFLIIEGINVFQNPQNNRLYMSDFFDFSIYIDADSDYIENWYLERFATLLDLAKNDKQNYYNRFLKLGEKGALDFARDIWKDINLVNLEKYIEPTRSRAELILHKTKNHKIDEIYLKK.

91–98 lines the ATP pocket; that stretch reads GSVAVGKS.

Belongs to the prokaryotic pantothenate kinase family.

Its subcellular location is the cytoplasm. It catalyses the reaction (R)-pantothenate + ATP = (R)-4'-phosphopantothenate + ADP + H(+). It participates in cofactor biosynthesis; coenzyme A biosynthesis; CoA from (R)-pantothenate: step 1/5. This Streptococcus mutans serotype c (strain ATCC 700610 / UA159) protein is Pantothenate kinase.